The chain runs to 483 residues: GTPase Der (483 aa).

EngA-type G domains follow at residues 3 to 167 (FTLA…GEER) and 212 to 387 (LRIA…EIWN). GTP contacts are provided by residues 9–16 (GRPNVGKS), 56–60 (DTAGL), 119–122 (NKAE), 218–225 (GRPNAGKS), 265–269 (DTAGM), and 330–333 (NKWD). In terms of domain architecture, KH-like spans 388 to 472 (RRISTGRLNR…PIRLSLRTSD (85 aa)).

It belongs to the TRAFAC class TrmE-Era-EngA-EngB-Septin-like GTPase superfamily. EngA (Der) GTPase family. Associates with the 50S ribosomal subunit.

Its function is as follows. GTPase that plays an essential role in the late steps of ribosome biogenesis. The polypeptide is GTPase Der (Brucella suis biovar 1 (strain 1330)).